The following is a 324-amino-acid chain: METQLLRFPSHTITSSITTNSSRNTTPFLPHKKWSHFVKFQLVNSSSSIKHGIRPLQASATSLGLGNKNRVDETESYTLDGIRHSLIRQEDSIIFSLVERAQYCYNAETYDPDVFAMDGFHGSLVEYIVRETEKLHATVGRYKSPDEHPFFPKVLPEPVLPPMQYPKVLHPIADSININVKIWEMYFENLLPRLVKEGDDGNYGSTAVCDTICVQALSKRIHYGKFVAEAKYRASPEVYNAAIRAQDRNGLMDLLTYPAVEEAIKRRVEIKTRTYGQELHINGPENGGDPVYKIKPSLVAELYGDWIMPLTKEVQVQYLLRRLD.

Residues 1–56 (METQLLRFPSHTITSSITTNSSRNTTPFLPHKKWSHFVKFQLVNSSSSIKHGIRPL) constitute a chloroplast transit peptide. R70 contacts L-phenylalanine. A Chorismate mutase domain is found at 70–324 (RVDETESYTL…QVQYLLRRLD (255 aa)). Residues R141 and 202-205 (NYGS) each bind L-tyrosine. An L-phenylalanine-binding site is contributed by 202–205 (NYGS).

Homodimer. In terms of tissue distribution, mostly expressed in petal tubes and petal limbs, and, to a lower extent, in stigmas, anthers, sepals, roots, stems and leaves.

Its subcellular location is the plastid. It is found in the chloroplast stroma. It catalyses the reaction chorismate = prephenate. It participates in metabolic intermediate biosynthesis; prephenate biosynthesis; prephenate from chorismate: step 1/1. Its activity is regulated as follows. Allosterically activated by tryptophan but not by tyrosine and phenylalanine. Component of the floral volatile benzenoid/phenylpropanoid (FVBPs) biosynthetic pathway. Mediates the conversion of chorismate to prephenate, thus coupling metabolites from the shikimate pathway to the synthesis of FVBPs in the corolla. In Petunia hybrida (Petunia), this protein is Chorismate mutase 1, chloroplastic.